The sequence spans 284 residues: Bifunctional protein FolD (284 aa).

NADP(+) contacts are provided by residues 166-168 (GSS) and I232.

It belongs to the tetrahydrofolate dehydrogenase/cyclohydrolase family. Homodimer.

It carries out the reaction (6R)-5,10-methylene-5,6,7,8-tetrahydrofolate + NADP(+) = (6R)-5,10-methenyltetrahydrofolate + NADPH. The catalysed reaction is (6R)-5,10-methenyltetrahydrofolate + H2O = (6R)-10-formyltetrahydrofolate + H(+). It functions in the pathway one-carbon metabolism; tetrahydrofolate interconversion. Functionally, catalyzes the oxidation of 5,10-methylenetetrahydrofolate to 5,10-methenyltetrahydrofolate and then the hydrolysis of 5,10-methenyltetrahydrofolate to 10-formyltetrahydrofolate. This Buchnera aphidicola subsp. Cinara cedri (strain Cc) protein is Bifunctional protein FolD.